The primary structure comprises 260 residues: Deoxycytidine kinase (260 aa).

A phosphoserine; by CK1 mark is found at Ser-11 and Ser-15. 28-36 is an ATP binding site; the sequence is GNIAAGKST. A substrate-binding site is contributed by Glu-53. Thr-72 carries the phosphothreonine; by CK1 modification. Ser-74 bears the Phosphoserine; by CK1 mark. Residues Tyr-86 and Gln-97 each coordinate substrate. The active-site Proton acceptor is Glu-127. 2 residues coordinate substrate: Arg-128 and Asp-133. 188–192 provides a ligand contact to ATP; sequence RIYIR. Residue Glu-197 participates in substrate binding. 240-242 contributes to the ATP binding site; sequence LDF.

Belongs to the DCK/DGK family. As to quaternary structure, homodimer. Post-translationally, phosphorylated and activated in vitro upon phosphorylation at Ser-74 by CSNK1D/CK1.

It localises to the nucleus. It catalyses the reaction 2'-deoxycytidine + a ribonucleoside 5'-triphosphate = dCMP + a ribonucleoside 5'-diphosphate + H(+). The enzyme catalyses 2'-deoxyadenosine + ATP = dAMP + ADP + H(+). The catalysed reaction is 2'-deoxyguanosine + ATP = dGMP + ADP + H(+). In terms of biological role, phosphorylates the deoxyribonucleosides deoxycytidine, deoxyguanosine and deoxyadenosine. This chain is Deoxycytidine kinase (Dck), found in Rattus norvegicus (Rat).